Here is a 567-residue protein sequence, read N- to C-terminus: Formate--tetrahydrofolate ligase (567 aa).

76 to 83 (TPAGEGKT) is a binding site for ATP.

The protein belongs to the formate--tetrahydrofolate ligase family.

It carries out the reaction (6S)-5,6,7,8-tetrahydrofolate + formate + ATP = (6R)-10-formyltetrahydrofolate + ADP + phosphate. It participates in one-carbon metabolism; tetrahydrofolate interconversion. This is Formate--tetrahydrofolate ligase from Sinorhizobium medicae (strain WSM419) (Ensifer medicae).